Here is a 213-residue protein sequence, read N- to C-terminus: Uridine kinase (213 aa).

ATP is bound at residue glycine 15–serine 22.

This sequence belongs to the uridine kinase family.

It is found in the cytoplasm. It catalyses the reaction uridine + ATP = UMP + ADP + H(+). It carries out the reaction cytidine + ATP = CMP + ADP + H(+). Its pathway is pyrimidine metabolism; CTP biosynthesis via salvage pathway; CTP from cytidine: step 1/3. It participates in pyrimidine metabolism; UMP biosynthesis via salvage pathway; UMP from uridine: step 1/1. In Cronobacter sakazakii (strain ATCC BAA-894) (Enterobacter sakazakii), this protein is Uridine kinase.